Here is a 201-residue protein sequence, read N- to C-terminus: FMN reductase (NADH) RutF (201 aa).

Positions 169 to 201 (APRSGAAPAEPARAARALGARPAEGPALALRSA) are disordered.

The protein belongs to the non-flavoprotein flavin reductase family. RutF subfamily.

It carries out the reaction FMNH2 + NAD(+) = FMN + NADH + 2 H(+). Catalyzes the reduction of FMN to FMNH2 which is used to reduce pyrimidine by RutA via the Rut pathway. This Methylorubrum extorquens (strain ATCC 14718 / DSM 1338 / JCM 2805 / NCIMB 9133 / AM1) (Methylobacterium extorquens) protein is FMN reductase (NADH) RutF.